The sequence spans 69 residues: U-Asilidin(12)-Dg3b (69 aa).

The signal sequence occupies residues 1–19 (MRFLNIFLFFAVMIAFVSA). Positions 20–33 (SPVLEEEEIDIEPR) are excised as a propeptide. Intrachain disulfides connect cysteine 36/cysteine 59, cysteine 45/cysteine 65, and cysteine 49/cysteine 67.

It belongs to the asilidin-12 family. As to expression, expressed by the venom gland.

The protein localises to the secreted. The recombinant peptide moderately increases Kv11.1/KCNH2/ERG1 currents and shifts the voltage-dependence of the channel activation to hyperpolarised potentials. In vivo, induces neurotoxic effects when injected into insects (tested on L.cuprina and A.domesticus). This chain is U-Asilidin(12)-Dg3b, found in Dolopus genitalis (Giant Australian assassin fly).